The chain runs to 555 residues: Xylulose kinase (555 aa).

Residues histidine 88, arginine 158, aspartate 274, and asparagine 275 each coordinate substrate. Residues tryptophan 357, 455 to 456 (GA), and asparagine 459 contribute to the ATP site.

Belongs to the FGGY kinase family.

It localises to the cytoplasm. It carries out the reaction D-xylulose + ATP = D-xylulose 5-phosphate + ADP + H(+). The sequence is that of Xylulose kinase from Schizosaccharomyces pombe (strain 972 / ATCC 24843) (Fission yeast).